A 585-amino-acid chain; its full sequence is Neopullulanase 2 (585 aa).

Residues N143, D145, N148, D149, G169, and D171 each contribute to the Ca(2+) site. H244 and R323 together coordinate substrate. D325 (nucleophile) is an active-site residue. E354 (proton donor) is an active-site residue. Residues 420 to 421 (HD), D465, and R469 contribute to the substrate site.

Belongs to the glycosyl hydrolase 13 family. As to quaternary structure, monomer. Requires Ca(2+) as cofactor.

It carries out the reaction Hydrolysis of pullulan to panose (6-alpha-D-glucosylmaltose).. Hydrolyzes pullulan efficiently but only a small amount of starch. Endohydrolysis of 1,4-alpha-glucosidic linkages in pullulan to form panose. Also cleaves (1-6)-alpha-glucosidic linkages to form maltotriose. The polypeptide is Neopullulanase 2 (tvaII) (Thermoactinomyces vulgaris).